We begin with the raw amino-acid sequence, 108 residues long: MSETFTEISPHQAWELIENEGATLADIRDGRRYAYSHPQDAFHLTNESYGRFLDEVDYEEPVIVMCYHGVSSRNTAQFLVEQGFDRVYSVKGGFDGWERSGLPIETAY.

Residues 18–106 (ENEGATLADI…WERSGLPIET (89 aa)) enclose the Rhodanese domain. C66 acts as the Cysteine persulfide intermediate in catalysis.

The protein belongs to the GlpE family.

The protein resides in the cytoplasm. It carries out the reaction thiosulfate + hydrogen cyanide = thiocyanate + sulfite + 2 H(+). The enzyme catalyses thiosulfate + [thioredoxin]-dithiol = [thioredoxin]-disulfide + hydrogen sulfide + sulfite + 2 H(+). In terms of biological role, transferase that catalyzes the transfer of sulfur from thiosulfate to thiophilic acceptors such as cyanide or dithiols. May function in a CysM-independent thiosulfate assimilation pathway by catalyzing the conversion of thiosulfate to sulfite, which can then be used for L-cysteine biosynthesis. The polypeptide is Thiosulfate sulfurtransferase GlpE (Actinobacillus pleuropneumoniae serotype 5b (strain L20)).